We begin with the raw amino-acid sequence, 429 residues long: Ribosomal RNA small subunit methyltransferase B (429 aa).

S-adenosyl-L-methionine is bound by residues 254–260 (CAAPGGK), aspartate 277, aspartate 303, and aspartate 322. Cysteine 375 functions as the Nucleophile in the catalytic mechanism. The disordered stretch occupies residues 397–419 (ALSETGTPDQPGQQNLPGGEEGD). A compositionally biased stretch (polar residues) spans 400 to 412 (ETGTPDQPGQQNL).

It belongs to the class I-like SAM-binding methyltransferase superfamily. RsmB/NOP family.

It localises to the cytoplasm. It carries out the reaction cytidine(967) in 16S rRNA + S-adenosyl-L-methionine = 5-methylcytidine(967) in 16S rRNA + S-adenosyl-L-homocysteine + H(+). Its function is as follows. Specifically methylates the cytosine at position 967 (m5C967) of 16S rRNA. The chain is Ribosomal RNA small subunit methyltransferase B from Salmonella choleraesuis (strain SC-B67).